We begin with the raw amino-acid sequence, 601 residues long: 4-hydroxy-3-methylbut-2-en-1-yl diphosphate synthase (flavodoxin) (601 aa).

[4Fe-4S] cluster is bound by residues C507, C510, C542, and E549.

The protein belongs to the IspG family. [4Fe-4S] cluster serves as cofactor.

The catalysed reaction is (2E)-4-hydroxy-3-methylbut-2-enyl diphosphate + oxidized [flavodoxin] + H2O + 2 H(+) = 2-C-methyl-D-erythritol 2,4-cyclic diphosphate + reduced [flavodoxin]. It functions in the pathway isoprenoid biosynthesis; isopentenyl diphosphate biosynthesis via DXP pathway; isopentenyl diphosphate from 1-deoxy-D-xylulose 5-phosphate: step 5/6. Converts 2C-methyl-D-erythritol 2,4-cyclodiphosphate (ME-2,4cPP) into 1-hydroxy-2-methyl-2-(E)-butenyl 4-diphosphate. This Chlamydia muridarum (strain MoPn / Nigg) protein is 4-hydroxy-3-methylbut-2-en-1-yl diphosphate synthase (flavodoxin).